The sequence spans 190 residues: Holliday junction branch migration complex subunit RuvA (190 aa).

The interval 1-64 (MIGSLTGIIE…DNLTQLYGFL (64 aa)) is domain I. The tract at residues 65-142 (DKQEQDYMRM…KMPIEETLII (78 aa)) is domain II. Residue Lys143 is a region of interest, flexible linker. Residues 143-190 (KEDDSLAALISLGYDKLKAFNAIQEIKANFPDDSIQEIIRKALQKLSQ) are domain III.

The protein belongs to the RuvA family. Homotetramer. Forms an RuvA(8)-RuvB(12)-Holliday junction (HJ) complex. HJ DNA is sandwiched between 2 RuvA tetramers; dsDNA enters through RuvA and exits via RuvB. An RuvB hexamer assembles on each DNA strand where it exits the tetramer. Each RuvB hexamer is contacted by two RuvA subunits (via domain III) on 2 adjacent RuvB subunits; this complex drives branch migration. In the full resolvosome a probable DNA-RuvA(4)-RuvB(12)-RuvC(2) complex forms which resolves the HJ.

The protein localises to the cytoplasm. Functionally, the RuvA-RuvB-RuvC complex processes Holliday junction (HJ) DNA during genetic recombination and DNA repair, while the RuvA-RuvB complex plays an important role in the rescue of blocked DNA replication forks via replication fork reversal (RFR). RuvA specifically binds to HJ cruciform DNA, conferring on it an open structure. The RuvB hexamer acts as an ATP-dependent pump, pulling dsDNA into and through the RuvAB complex. HJ branch migration allows RuvC to scan DNA until it finds its consensus sequence, where it cleaves and resolves the cruciform DNA. The sequence is that of Holliday junction branch migration complex subunit RuvA from Ehrlichia chaffeensis (strain ATCC CRL-10679 / Arkansas).